Reading from the N-terminus, the 138-residue chain is Proofreading thioesterase EntH (138 aa).

The active-site Nucleophile or proton acceptor is E64.

It belongs to the thioesterase PaaI family. In terms of assembly, homotetramer. Dimer of dimers. Interacts specifically with the aryl carrier protein (ArCP) domain of EntB.

The protein localises to the cytoplasm. Its pathway is siderophore biosynthesis; enterobactin biosynthesis. Its function is as follows. Required for optimal enterobactin synthesis. Acts as a proofreading enzyme that prevents EntB misacylation by hydrolyzing the thioester bound existing between EntB and wrongly charged molecules. This chain is Proofreading thioesterase EntH, found in Salmonella arizonae (strain ATCC BAA-731 / CDC346-86 / RSK2980).